Here is a 221-residue protein sequence, read N- to C-terminus: Eukaryotic translation initiation factor 3 subunit K (221 aa).

The region spanning 46–215 (YDLEANLACL…EKIEFDNLAP (170 aa)) is the PCI domain.

The protein belongs to the eIF-3 subunit K family. As to quaternary structure, component of the eukaryotic translation initiation factor 3 (eIF-3) complex.

The protein localises to the cytoplasm. Functionally, component of the eukaryotic translation initiation factor 3 (eIF-3) complex, which is involved in protein synthesis of a specialized repertoire of mRNAs and, together with other initiation factors, stimulates binding of mRNA and methionyl-tRNAi to the 40S ribosome. The eIF-3 complex specifically targets and initiates translation of a subset of mRNAs involved in cell proliferation. This chain is Eukaryotic translation initiation factor 3 subunit K, found in Anopheles gambiae (African malaria mosquito).